Reading from the N-terminus, the 505-residue chain is Holliday junction branch migration ATPase PINA (505 aa).

The 105-residue stretch at 2–106 folds into the PINc domain; sequence NDLMLDKSAL…IVTADETQKK (105 aa). Residues 434 to 505 are KH domain; the sequence is PVNRGITMSN…NIKIKIKLSD (72 aa). Residues 493-505 form a required for maximum interaction with Hjc and Hjm region; it reads KKNNIKIKIKLSD.

As to quaternary structure, homohexamer; the central pore (25-31 Angstroms) is large enough to hold dsDNA. In PDB:5F4H two of the 6 subunits are in an ATP-binding competent conformation. Interacts with Holliday junction resolvase Hjc; in the presence of HJ DNA this interaction decreases branch migration but not Y-DNA unwinding. Interacts with helicase Hjm (hel308) which decreases the DNA helicase activity of Hjm. Ca(2+) is required as a cofactor.

It carries out the reaction ATP + H2O = ADP + phosphate + H(+). Its function is as follows. Promotes Holliday junction (HJ) branch migration and unwinds Y-shaped DNA (but not replication forks or dsDNA) in an ATP hydrolysis-dependent manner. Stimulates cleavage by HJ resolvase Hjc. Unwinds Y-shaped and 3'-flap DNA substrates. In the absence of other proteins stabilizes replication forks (prevents spontaneous unwinding); Hjc, Hjm (Hel308) and PINA coordinate HJ migration and cleavage of replication forks in a coordinated way. Inhibits the 5'-3' (but not 3'-5') helicase activity of helicase Hjm (Hel308) on overhang DNA. Probably acts as an ATP-dependent pump that pulls DNA through the hexamer. The sequence is that of Holliday junction branch migration ATPase PINA from Saccharolobus islandicus (strain REY15A) (Sulfolobus islandicus).